The following is a 318-amino-acid chain: Protein-methionine-sulfoxide reductase catalytic subunit MsrP (318 aa).

A signal peptide (tat-type signal) is located at residues 1 to 40 (MNRFTRYDVTPEAIFNQRRQIIKAMGLGAAALSLPNIGFA). Mo-molybdopterin-binding positions include N72, 75–76 (YE), C130, T165, N217, R222, and 233–235 (SIK).

It belongs to the MsrP family. In terms of assembly, heterodimer of a catalytic subunit (MsrP) and a heme-binding subunit (MsrQ). Mo-molybdopterin serves as cofactor. Predicted to be exported by the Tat system. The position of the signal peptide cleavage has not been experimentally proven.

The protein resides in the periplasm. It carries out the reaction L-methionyl-[protein] + a quinone + H2O = L-methionyl-(S)-S-oxide-[protein] + a quinol. The catalysed reaction is L-methionyl-[protein] + a quinone + H2O = L-methionyl-(R)-S-oxide-[protein] + a quinol. In terms of biological role, part of the MsrPQ system that repairs oxidized periplasmic proteins containing methionine sulfoxide residues (Met-O), using respiratory chain electrons. Thus protects these proteins from oxidative-stress damage caused by reactive species of oxygen and chlorine generated by the host defense mechanisms. MsrPQ is essential for the maintenance of envelope integrity under bleach stress, rescuing a wide series of structurally unrelated periplasmic proteins from methionine oxidation. The catalytic subunit MsrP is non-stereospecific, being able to reduce both (R-) and (S-) diastereoisomers of methionine sulfoxide. In Actinobacillus pleuropneumoniae serotype 5b (strain L20), this protein is Protein-methionine-sulfoxide reductase catalytic subunit MsrP.